Here is a 2327-residue protein sequence, read N- to C-terminus: Voltage-dependent N-type calcium channel subunit alpha-1B (2327 aa).

Residues 1–37 (MVRFGDELGGRYGGTGGGERARGGGAGGAGGPGQGGL) are disordered. Topologically, residues 1-90 (MVRFGDELGG…DNVVRKYAKR (90 aa)) are cytoplasmic. A compositionally biased stretch (gly residues) spans 10–37 (GRYGGTGGGERARGGGAGGAGGPGQGGL). R22 carries the omega-N-methylarginine modification. The stretch at 82–359 (NVVRKYAKRI…LVLGVLSGEF (278 aa)) is one I repeat. The helical transmembrane segment at 91 to 114 (ITEWPPFEYMILATIIANCIVLAL) threads the bilayer. Over 115-131 (EQHLPDGDKTPMSERLD) the chain is Extracellular. Residues 132-152 (DTEPYFIGIFCFEAGIKIIAL) form a helical membrane-spanning segment. The Cytoplasmic portion of the chain corresponds to 153–163 (GFVFHKGSYLR). The chain crosses the membrane as a helical span at residues 164–182 (NGWNVMDFVVVLTGILATA). Over 183-187 (GTDFD) the chain is Extracellular. A helical transmembrane segment spans residues 188–211 (LRTLRAVRVLRPLKLVSGIPSLQV). The Cytoplasmic segment spans residues 212–221 (VLKSIMKAMV). Residues 222 to 244 (PLLQIGLLLFFAILMFAIIGLEF) traverse the membrane as a helical segment. Residues 245-331 (YMGKFHKACF…NTNDAAGNTW (87 aa)) lie on the Extracellular side of the membrane. An N-linked (GlcNAc...) asparagine glycan is attached at N256. A helical transmembrane segment spans residues 332-356 (NWLYFIPLIIIGSFFMLNLVLGVLS). Residues 357-482 (GEFAKERERV…FFIRRMVKAQ (126 aa)) are Cytoplasmic-facing. The binding to the beta subunit stretch occupies residues 379 to 396 (QQIERELNGYLEWIFKAE). S411 carries the post-translational modification Phosphoserine. 451-458 (ASLKSGKT) is a binding site for ATP. Residues 468-712 (EKMFRFFIRR…VFLAIAVDNL (245 aa)) form an II repeat. The chain crosses the membrane as a helical span at residues 483–501 (SFYWVVLCVVALNTLCVAM). Over 502-511 (VHYNQPQRLT) the chain is Extracellular. The helical transmembrane segment at 512-534 (TALYFAEFVFLGLFLTEMSLKMY) threads the bilayer. At 535 to 544 (GLGPRSYFRS) the chain is on the cytoplasmic side. S544 contributes to the a 1,2-diacyl-sn-glycero-3-phospho-(1D-myo-inositol-4,5-bisphosphate) binding site. The chain crosses the membrane as a helical span at residues 545–566 (SFNCFDFGVIVGSIFEVVWAAI). Residues 567 to 573 (KPGTSFG) lie on the Extracellular side of the membrane. A helical transmembrane segment spans residues 574–586 (ISVLRALRLLRIF). Residues R584 and K587 each coordinate a 1,2-diacyl-sn-glycero-3-phospho-(1D-myo-inositol-4,5-bisphosphate). Topologically, residues 587-604 (KVTKYWNSLRNLVVSLLN) are cytoplasmic. The helical transmembrane segment at 605–630 (SMKSIISLLFLLFLFIVVFALLGMQL) threads the bilayer. The Extracellular portion of the chain corresponds to 631-682 (FGGQFNFQDETPTTNFDTFPAAILTVFQILTGEDWNAVMYHGIESQGGVSKG). The helical transmembrane segment at 683–709 (MFSSFYFIVLTLFGNYTLLNVFLAIAV) threads the bilayer. Topologically, residues 710-1140 (DNLANAQELT…FCHYIVTMRY (431 aa)) are cytoplasmic. A phosphoserine mark is found at S745, S748, and S783. Disordered regions lie at residues 802 to 1015 (TRHV…KEPH) and 1042 to 1066 (EQPEDADNQRNVTRMGSQPSDPSTT). Basic and acidic residues-rich tracts occupy residues 805–826 (VRPDMKTHMDRPLVVEPGRDGL), 869–885 (EQDRTESTETGAREERA), 914–924 (GSPEEATEREP), 961–972 (GPREAENNEEPT), and 988–1015 (PEREAAEKESNAVEGDKETRNHQPKEPH). Residues 1050–1066 (QRNVTRMGSQPSDPSTT) show a composition bias toward polar residues. At S1058 the chain carries Phosphoserine. An III repeat occupies 1126–1412 (NLLRRFCHYI…IFVALIIITF (287 aa)). Residues 1141 to 1159 (FEMVILVVIALSSIALAAE) traverse the membrane as a helical segment. Topologically, residues 1160–1167 (DPVRTDSF) are extracellular. The helical transmembrane segment at 1168-1192 (RNNALKYMDYIFTGVFTFEMVIKMI) threads the bilayer. Over 1193–1206 (DLGLLLHPGAYFRD) the chain is Cytoplasmic. The chain crosses the membrane as a helical span at residues 1207–1231 (LWNILDFIVVSGALVAFAFSSFMGG). The Extracellular portion of the chain corresponds to 1232–1237 (SKGKDI). The chain crosses the membrane as a helical span at residues 1238-1258 (NTIKSLRVLRVLRPLKTIKRL). The Cytoplasmic portion of the chain corresponds to 1259-1276 (PKLKAVFDCVVNSLKNVL). The chain crosses the membrane as a helical span at residues 1277 to 1296 (NILIVYMLFMFIFAVIAVQL). Over 1297–1383 (FKGKFFYCTD…EQGPSPGFRM (87 aa)) the chain is Extracellular. Residues 1384 to 1409 (ELSIFYVVYFVVFPFFFVNIFVALII) traverse the membrane as a helical segment. Over 1410–1464 (ITFQEQGDKVMSECSLEKNERACIDFAISAKPLTRYMPQNKQSFQYKTWTFVVSP) the chain is Cytoplasmic. An IV repeat occupies 1449-1702 (NKQSFQYKTW…LFVAVIMDNF (254 aa)). Residues 1465–1483 (PFEYFIMAMIALNTVVLMM) traverse the membrane as a helical segment. Over 1484–1491 (KFYDAPYE) the chain is Extracellular. Residues 1492–1516 (YELMLKCLNIVFTSMFSMECILKII) traverse the membrane as a helical segment. Residues 1517-1526 (AFGVLNYFRD) are Cytoplasmic-facing. A helical membrane pass occupies residues 1527–1548 (AWNVFDFVTVLGSITDILVTEI). The Extracellular portion of the chain corresponds to 1549 to 1554 (ANNFIN). N1554 carries N-linked (GlcNAc...) asparagine glycosylation. The helical transmembrane segment at 1555–1573 (LSFLRLFRAARLIKLLRQG) threads the bilayer. Over 1574–1592 (YTIRILLWTFVQSFKALPY) the chain is Cytoplasmic. Residues 1593–1612 (VCLLIAMLFFIYAIIGMQVF) traverse the membrane as a helical segment. The Extracellular segment spans residues 1613–1674 (GNIALDDDTS…ANASECGSDF (62 aa)). N1666 carries an N-linked (GlcNAc...) asparagine glycan. The helical transmembrane segment at 1675–1698 (AYFYFVSFIFLCSFLMLNLFVAVI) threads the bilayer. The Cytoplasmic segment spans residues 1699–2327 (MDNFEYLTRD…YHHPDQDHWC (629 aa)). An EF-hand domain is found at 1715-1750 (HHLDEFIRVWAEYDPAACGRISYNDMFEMLKHMSPP). Ca(2+) contacts are provided by D1728, R1734, and D1739. The interval 1972–2193 (TLRGPDGEPQ…TPRPSITYKT (222 aa)) is disordered. Residues 2039–2053 (SHHHHHRCHRRRDKK) show a composition bias toward basic residues. S2056 carries the post-translational modification Phosphoserine. Basic and acidic residues predominate over residues 2088–2104 (CRRDRKQERGRSQERRQ). 2 stretches are compositionally biased toward polar residues: residues 2131–2141 (PSLSSHPTSPT) and 2152–2168 (GSGSVNGSPLMSTSGAS). 3 positions are modified to phosphoserine: S2212, S2221, and S2244. Disordered stretches follow at residues 2230-2249 (EPLSQPLAPGSRIGSDPYLG) and 2273-2292 (ATNSGRSSRTSYVSSLTSQS). A compositionally biased stretch (low complexity) spans 2276–2292 (SGRSSRTSYVSSLTSQS).

It belongs to the calcium channel alpha-1 subunit (TC 1.A.1.11) family. CACNA1B subfamily. As to quaternary structure, multisubunit complex consisting of alpha-1, alpha-2, beta and delta subunits in a 1:1:1:1 ratio. The channel activity is directed by the pore-forming and voltage-sensitive alpha-1 subunit. In many cases, this subunit is sufficient to generate voltage-sensitive calcium channel activity. The auxiliary subunits beta and alpha-2/delta linked by a disulfide bridge regulate the channel activity. Interacts with RIMS1. Interacts with FMR1 (via C-terminus); this interaction induces a decrease in the number of presynaptic functional CACNA1B channels at the cell surface. Phosphorylated in vitro by CaM-kinase II, PKA, PKC and CGPK. Widespread expression throughout the brain. Highest levels in pyramidal cell layers C1, C2 and C3 of the hippocampus, in the dentate gyrus, in the cortex layers 2 et 4, in the subiculum and the habenula.

It is found in the membrane. It carries out the reaction Ca(2+)(in) = Ca(2+)(out). Is specifically blocked by omega-conotoxin GVIA. Is specifically blocked by omega-conotoxin MVIIA (ziconotide). Is insensitive to dihydropyridines (DHP). In terms of biological role, voltage-sensitive calcium channels (VSCC) mediate the entry of calcium ions into excitable cells and are also involved in a variety of calcium-dependent processes, including muscle contraction, hormone or neurotransmitter release, gene expression, cell motility, cell division and cell death. This alpha-1B subunit gives rise to N-type calcium currents. N-type calcium channels belong to the 'high-voltage activated' (HVA) group. They are involved in pain signaling. Calcium channels containing alpha-1B subunit may play a role in directed migration of immature neurons. Mediates Ca(2+) release probability at hippocampal neuronal soma and synaptic terminals. This chain is Voltage-dependent N-type calcium channel subunit alpha-1B (Cacna1b), found in Mus musculus (Mouse).